The sequence spans 647 residues: Solute carrier family 23 member 2 (647 aa).

A compositionally biased stretch (polar residues) spans 1 to 11 (MMGVGKNTSKS). The interval 1–26 (MMGVGKNTSKSVEVGGSTEGKYEEEA) is disordered. The Cytoplasmic portion of the chain corresponds to 8–109 (TSKSVEVGGS…LCIFLGLQHY (102 aa)). S69 bears the Phosphoserine mark. T74 bears the Phosphothreonine mark. The residue at position 77 (S77) is a Phosphoserine. T78 carries the phosphothreonine modification. Position 80 is a phosphoserine (S80). A helical transmembrane segment spans residues 110-130 (LTCFSGTIAVPFLLADAMCVG). Over 131–138 (DDQWATSQ) the chain is Extracellular. A helical membrane pass occupies residues 139-159 (LIGTIFFCVGITTLLQTTFGC). A topological domain (cytoplasmic) is located at residue R160. The chain crosses the membrane as a helical span at residues 161–181 (LPLFQASAFAFLAPARAILSL). Topologically, residues 182 to 215 (DKWKCNTTEITVANGTAELLEHIWHPRIQEIQGA) are extracellular. 2 N-linked (GlcNAc...) asparagine glycosylation sites follow: N187 and N195. A helical membrane pass occupies residues 216–236 (IIMSSLIEVVIGLLGLPGALL). The Cytoplasmic segment spans residues 237–263 (RYIGPLTITPTVALIGLSGFQAAGERA). The helical transmembrane segment at 264 to 281 (GKHWGIAMLTIFLVLLFS) threads the bilayer. The Extracellular portion of the chain corresponds to 282 to 285 (QYAR). The helical intramembrane region spans 286–299 (NVKFPLPIYKSKKG). Residues 300 to 306 (WTAYKLQ) are Extracellular-facing. Residues 307-327 (LFKMFPIILAILVSWLLCFIF) form a helical membrane-spanning segment. Over 328 to 368 (TVTDVFPSNSTDYGYYARTDARKGVLLVAPWFKVPYPFQWG) the chain is Cytoplasmic. The helical transmembrane segment at 369-389 (MPTVSAAGVIGMLSAVVASII) threads the bilayer. The Extracellular segment spans residues 390 to 414 (ESIGDYYACARLSCAPPPPIHAINR). Residues 415–435 (GIFVEGLSCVLDGVFGTGNGS) traverse the membrane as a helical segment. The Cytoplasmic portion of the chain corresponds to 436–458 (TSSSPNIGVLGITKVGSRRVIQY). A helical membrane pass occupies residues 459 to 479 (GAALMLGLGMIGKFSALFASL). The Extracellular portion of the chain corresponds to 480-482 (PDP). Residues 483–503 (VLGALFCTLFGMITAVGLSNL) form a helical membrane-spanning segment. Topologically, residues 504–513 (QFIDLNSSRN) are cytoplasmic. A helical transmembrane segment spans residues 514-534 (LFVLGFSIFFGLVLPSYLRQN). Topologically, residues 535–544 (PLVTGITGID) are extracellular. The chain crosses the membrane as a helical span at residues 545–565 (QVLNVLLTTAMFVGGCVAFIL). Topologically, residues 566-647 (DNTIPGTPEE…SSDKDSQATV (82 aa)) are cytoplasmic. T646 is subject to Phosphothreonine.

Belongs to the nucleobase:cation symporter-2 (NCS2) (TC 2.A.40) family. As to quaternary structure, interacts with CLSTN3. Post-translationally, phosphorylated. Highly expressed in neural, neuroendocrine, exocrine and endothelial tissues and in osteoblasts. Detected in neurons throughout the central nervous system, in meninges and choroid plexus, in the anterior pituitary, the intermediate lobe, in pancreas, adrenal cortex, gastric glands, and in the inner nuclear layer of the retina.

Its subcellular location is the cell membrane. The enzyme catalyses L-ascorbate(out) + 2 Na(+)(out) = L-ascorbate(in) + 2 Na(+)(in). Its function is as follows. Sodium/ascorbate cotransporter. Mediates electrogenic uptake of vitamin C, with a stoichiometry of 2 Na(+) for each ascorbate. In Rattus norvegicus (Rat), this protein is Solute carrier family 23 member 2 (Slc23a2).